The following is a 210-amino-acid chain: Viral protein 1 (210 aa).

The protein is Viral protein 1 of Chaetoceros (Chaetoceros sp. DNA virus 7).